The sequence spans 238 residues: Ribonuclease PH (238 aa).

Phosphate-binding positions include Arg-86 and 124–126 (GTR).

Belongs to the RNase PH family. Homohexameric ring arranged as a trimer of dimers.

The catalysed reaction is tRNA(n+1) + phosphate = tRNA(n) + a ribonucleoside 5'-diphosphate. In terms of biological role, phosphorolytic 3'-5' exoribonuclease that plays an important role in tRNA 3'-end maturation. Removes nucleotide residues following the 3'-CCA terminus of tRNAs; can also add nucleotides to the ends of RNA molecules by using nucleoside diphosphates as substrates, but this may not be physiologically important. Probably plays a role in initiation of 16S rRNA degradation (leading to ribosome degradation) during starvation. The polypeptide is Ribonuclease PH (Marinobacter nauticus (strain ATCC 700491 / DSM 11845 / VT8) (Marinobacter aquaeolei)).